A 341-amino-acid polypeptide reads, in one-letter code: Serine/threonine-protein kinase pdik1l (341 aa).

The Protein kinase domain occupies 8–332 (YELIQEVGRG…FELELRLVRI (325 aa)). Residue 14 to 22 (VGRGSYGVV) coordinates ATP. The active-site Proton acceptor is D164.

This sequence belongs to the protein kinase superfamily. Ser/Thr protein kinase family.

Its subcellular location is the nucleus. It carries out the reaction L-seryl-[protein] + ATP = O-phospho-L-seryl-[protein] + ADP + H(+). The catalysed reaction is L-threonyl-[protein] + ATP = O-phospho-L-threonyl-[protein] + ADP + H(+). In Danio rerio (Zebrafish), this protein is Serine/threonine-protein kinase pdik1l (pdik1l).